A 132-amino-acid polypeptide reads, in one-letter code: Ribosome-binding factor A (132 aa).

Belongs to the RbfA family. In terms of assembly, monomer. Binds 30S ribosomal subunits, but not 50S ribosomal subunits or 70S ribosomes.

It localises to the cytoplasm. Its function is as follows. One of several proteins that assist in the late maturation steps of the functional core of the 30S ribosomal subunit. Associates with free 30S ribosomal subunits (but not with 30S subunits that are part of 70S ribosomes or polysomes). Required for efficient processing of 16S rRNA. May interact with the 5'-terminal helix region of 16S rRNA. This Prochlorococcus marinus subsp. pastoris (strain CCMP1986 / NIES-2087 / MED4) protein is Ribosome-binding factor A.